A 660-amino-acid polypeptide reads, in one-letter code: Potassium voltage-gated channel subfamily KQT member 1 (660 aa).

The segment covering 1–18 (MSSEVKSRWSGSGSQKSG) has biased composition (polar residues). The interval 1-67 (MSSEVKSRWS…PESRAADSRA (67 aa)) is disordered. Residues 1 to 113 (MSSEVKSRWS…YNFLERPTGW (113 aa)) are Cytoplasmic-facing. Over residues 53–67 (STDKNPESRAADSRA) the composition is skewed to basic and acidic residues. The helical transmembrane segment at 114 to 135 (KCFIYHFTVFLIVLVCLIFSVM) threads the bilayer. The Extracellular portion of the chain corresponds to 136-146 (STIEQYHYFAN). Residues 147-169 (RALVWMEIVLVVFFGTEYIVRLW) traverse the membrane as a helical segment. Residues 170–185 (SAGCRSKYVGFWGRLR) are Cytoplasmic-facing. The helical transmembrane segment at 186–211 (FARKPISIIDLIVVVASVIVLCVGSN) threads the bilayer. Residues 212–219 (GQVFATSA) lie on the Extracellular side of the membrane. Residues 220-235 (IRGIRFLQILRMLHVD) form a helical; Voltage-sensor membrane-spanning segment. Over 236-253 (RQGGTWRLLGSVVFIHRQ) the chain is Cytoplasmic. Glutamine 237 contributes to the a 1,2-diacyl-sn-glycero-3-phospho-(1D-myo-inositol-4,5-bisphosphate) binding site. A helical transmembrane segment spans residues 254 to 276 (ELITTLYIGFLGLIFSSYFVYLA). The Extracellular portion of the chain corresponds to 277–292 (EKDAVDDSGSQQFGSY). Positions 293–313 (ADALWWGVVTVTTIGYGDKVP) form an intramembrane region, pore-forming. Residues 314-315 (QT) are Extracellular-facing. The helical transmembrane segment at 316-341 (WIGRTIASCFSVFAISFFALPAGILG) threads the bilayer. The Cytoplasmic segment spans residues 342–660 (SGFALKVQQK…RKDQDNQPDL (319 aa)). A disordered region spans residues 399–426 (SPSPKTKKSVGKRKKLKTDKDNGLNSEK). Residues 403–415 (KTKKSVGKRKKLK) show a composition bias toward basic residues. Residues 579 to 615 (KNTIGARLNRVEEKFVHMDQKLNTITDMLHHLVAHQQ) adopt a coiled-coil conformation.

The protein belongs to the potassium channel family. KQT (TC 1.A.1.15) subfamily. Kv7.1/KCNQ1 sub-subfamily. In terms of assembly, tetramer. Heterotetramer with KCNE1; targets to the membrane raft. Interacts (via C-terminus) with CALM; forms a heterotetramer in a calcium-independent manner. Interacts with KCNE2; form a heterooligomer complex that targets to the membrane raft and leading to currents with an apparently instantaneous activation, a rapid deactivation process and a linear current-voltage relationship and decreases the amplitude of the outward current. Interacts with KCNE3; four KCNE3 molecules are bound to one KCNQ1 tetramer (4:4 KCNQ1:KCNE3 stoichiometry); alters membrane raft localization; affects KCNQ1 structure and gating properties. Interacts with KCNE4; impairs KCNQ1 localization in lipid rafts and inhibits voltage-gated potassium channel activity. Interacts with KCNE5; impairs KCNQ1 localization in lipid rafts and only conducts current upon strong and continued depolarization. As to expression, expressed only in rectal gland and heart. Faintly expressed in intestine. Undetectable in kidney, brain, testis, liver and gills.

It localises to the cell membrane. The protein resides in the cytoplasmic vesicle membrane. Its subcellular location is the membrane raft. The protein localises to the endoplasmic reticulum. It is found in the basolateral cell membrane. The catalysed reaction is K(+)(in) = K(+)(out). PIP2 molecule is essential to activate KCNQ channels by inducing the coupling of the voltage-sensing domain (VSD) and the pore-forming domain (PD). Upon channel activation, PIP2 disrupts the VSD-calmodulin/CALM interactions, causing the release of CALM from the VSD which triggers the opening of the gate. Calcium potentiates KCNQ1 channel current through calcium-bound CALM. Calcium-bound CALM competes with PIP2 to stabilize the channel open state. Functionally, pore-forming subunit of the voltage-gated potassium (Kv) channel involved in the regulation of cardiomyocyte excitability and important in normal development and functions of myocardium, inner ear, stomach and colon. Associates with KCNE beta subunits that modulates current kinetics. Induces a voltage-dependent by rapidly activating and slowly deactivating potassium-selective outward current. Also promotes a delayed voltage activated potassium current showing outward rectification characteristic. During beta-adrenergic receptor stimulation participates in cardiac repolarization by associating with KCNE1 to form the I(Ks) cardiac potassium current that increases the amplitude and slows down the activation kinetics of outward potassium current I(Ks). When associated with KCNE3, forms the potassium channel that is important for cyclic AMP-stimulated intestinal secretion of chloride ions. When associated with KCNE2, forms a heterooligomer complex leading to currents with an apparently instantaneous activation, a rapid deactivation process and a linear current-voltage relationship and decreases the amplitude of the outward current. When associated with KCNE4, inhibits voltage-gated potassium channel activity. When associated with KCNE5, this complex only conducts current upon strong and continued depolarization. The sequence is that of Potassium voltage-gated channel subfamily KQT member 1 from Squalus acanthias (Spiny dogfish).